We begin with the raw amino-acid sequence, 243 residues long: Leucyl/phenylalanyl-tRNA--protein transferase (243 aa).

It belongs to the L/F-transferase family.

The protein localises to the cytoplasm. It carries out the reaction N-terminal L-lysyl-[protein] + L-leucyl-tRNA(Leu) = N-terminal L-leucyl-L-lysyl-[protein] + tRNA(Leu) + H(+). The enzyme catalyses N-terminal L-arginyl-[protein] + L-leucyl-tRNA(Leu) = N-terminal L-leucyl-L-arginyl-[protein] + tRNA(Leu) + H(+). The catalysed reaction is L-phenylalanyl-tRNA(Phe) + an N-terminal L-alpha-aminoacyl-[protein] = an N-terminal L-phenylalanyl-L-alpha-aminoacyl-[protein] + tRNA(Phe). Functionally, functions in the N-end rule pathway of protein degradation where it conjugates Leu, Phe and, less efficiently, Met from aminoacyl-tRNAs to the N-termini of proteins containing an N-terminal arginine or lysine. The protein is Leucyl/phenylalanyl-tRNA--protein transferase of Vibrio cholerae serotype O1 (strain ATCC 39315 / El Tor Inaba N16961).